We begin with the raw amino-acid sequence, 83 residues long: uncharacterized protein (83 aa).

The helical transmembrane segment at 24-44 threads the bilayer; that stretch reads AMTLLIITNTLLIILSYSVLL.

It is found in the host membrane. This is an uncharacterized protein from Acidianus sp. F28 (AFV-2).